The sequence spans 406 residues: Probable tRNA pseudouridine synthase D (406 aa).

D77 (nucleophile) is an active-site residue. The TRUD domain maps to 150–371; sequence GFPNYFGIQR…PGGRRELLIK (222 aa).

It belongs to the pseudouridine synthase TruD family.

The enzyme catalyses uridine(13) in tRNA = pseudouridine(13) in tRNA. Functionally, could be responsible for synthesis of pseudouridine from uracil-13 in transfer RNAs. In Pyrococcus abyssi (strain GE5 / Orsay), this protein is Probable tRNA pseudouridine synthase D.